We begin with the raw amino-acid sequence, 828 residues long: Outer membrane usher protein PmfC (828 aa).

An N-terminal signal peptide occupies residues Met1 to Ala28.

This sequence belongs to the fimbrial export usher family.

The protein localises to the cell outer membrane. In terms of biological role, involved in the export and assembly of PMF fimbrial subunits across the outer membrane. The sequence is that of Outer membrane usher protein PmfC (pmfC) from Proteus mirabilis (strain HI4320).